We begin with the raw amino-acid sequence, 525 residues long: GMP synthase [glutamine-hydrolyzing] (525 aa).

One can recognise a Glutamine amidotransferase type-1 domain in the interval 9–207; it reads RILILDFGSQ…VRDICQCEAL (199 aa). The active-site Nucleophile is the Cys-86. Catalysis depends on residues His-181 and Glu-183. The GMPS ATP-PPase domain maps to 208-400; it reads WTPAKIIDDA…LGLPYDMLYR (193 aa). 235–241 lines the ATP pocket; the sequence is SGGVDSS.

In terms of assembly, homodimer.

The enzyme catalyses XMP + L-glutamine + ATP + H2O = GMP + L-glutamate + AMP + diphosphate + 2 H(+). It functions in the pathway purine metabolism; GMP biosynthesis; GMP from XMP (L-Gln route): step 1/1. In terms of biological role, catalyzes the synthesis of GMP from XMP. This is GMP synthase [glutamine-hydrolyzing] from Klebsiella pneumoniae subsp. pneumoniae (strain ATCC 700721 / MGH 78578).